Consider the following 235-residue polypeptide: Adapter protein MecA (235 aa).

Over residues 113–135 (LRQSDKGDIVKSKVSSSDHKDGS) the composition is skewed to basic and acidic residues. The disordered stretch occupies residues 113 to 136 (LRQSDKGDIVKSKVSSSDHKDGSQ).

This sequence belongs to the MecA family. In terms of assembly, homodimer.

In terms of biological role, enables the recognition and targeting of unfolded and aggregated proteins to the ClpC protease or to other proteins involved in proteolysis. In Leuconostoc mesenteroides subsp. mesenteroides (strain ATCC 8293 / DSM 20343 / BCRC 11652 / CCM 1803 / JCM 6124 / NCDO 523 / NBRC 100496 / NCIMB 8023 / NCTC 12954 / NRRL B-1118 / 37Y), this protein is Adapter protein MecA.